Reading from the N-terminus, the 145-residue chain is Ribosome maturation factor RimP (145 aa).

The protein belongs to the RimP family.

The protein localises to the cytoplasm. Required for maturation of 30S ribosomal subunits. This Azotobacter vinelandii (strain DJ / ATCC BAA-1303) protein is Ribosome maturation factor RimP.